A 116-amino-acid chain; its full sequence is Ribonuclease P protein component (116 aa).

Belongs to the RnpA family. Consists of a catalytic RNA component (M1 or rnpB) and a protein subunit.

It catalyses the reaction Endonucleolytic cleavage of RNA, removing 5'-extranucleotides from tRNA precursor.. Its function is as follows. RNaseP catalyzes the removal of the 5'-leader sequence from pre-tRNA to produce the mature 5'-terminus. It can also cleave other RNA substrates such as 4.5S RNA. The protein component plays an auxiliary but essential role in vivo by binding to the 5'-leader sequence and broadening the substrate specificity of the ribozyme. The polypeptide is Ribonuclease P protein component (Citrifermentans bemidjiense (strain ATCC BAA-1014 / DSM 16622 / JCM 12645 / Bem) (Geobacter bemidjiensis)).